Here is an 886-residue protein sequence, read N- to C-terminus: Translation initiation factor IF-2 (886 aa).

Disordered regions lie at residues 1-25 (MSET…LKRP), 50-229 (RRAL…PAEE), and 253-272 (KGAE…TGDE). Over residues 50–60 (RRALGEPHVLR) the composition is skewed to basic and acidic residues. The segment covering 63-73 (APALDVVAPAP) has biased composition (low complexity). A compositionally biased stretch (pro residues) spans 74-83 (QAAPPAPTQQ). A compositionally biased stretch (low complexity) spans 84–106 (PQPRVASRPQPQQRSSSGVILRS). Basic and acidic residues predominate over residues 107–181 (LTEEEREARS…KRRSESEAKR (75 aa)). A compositionally biased stretch (low complexity) spans 185–225 (GGEPAPAGANAAPRKAPALSAAPGSAAPSGQPGPAGAVGAR). The tr-type G domain occupies 383–553 (SRPPVVTIMG…ALQAELLDLK (171 aa)). Residues 392–399 (GHVDHGKT) are G1. 392–399 (GHVDHGKT) contacts GTP. Residues 417–421 (GITQH) form a G2 region. Residues 439-442 (DTPG) are G3. Residues 439–443 (DTPGH) and 493–496 (NKID) each bind GTP. The interval 493 to 496 (NKID) is G4. The G5 stretch occupies residues 529 to 531 (SAT).

It belongs to the TRAFAC class translation factor GTPase superfamily. Classic translation factor GTPase family. IF-2 subfamily.

The protein resides in the cytoplasm. One of the essential components for the initiation of protein synthesis. Protects formylmethionyl-tRNA from spontaneous hydrolysis and promotes its binding to the 30S ribosomal subunits. Also involved in the hydrolysis of GTP during the formation of the 70S ribosomal complex. The sequence is that of Translation initiation factor IF-2 from Methylocella silvestris (strain DSM 15510 / CIP 108128 / LMG 27833 / NCIMB 13906 / BL2).